The following is a 647-amino-acid chain: Homologous recombination OB-fold protein (647 aa).

At serine 47 the chain carries Phosphoserine. Disordered regions lie at residues 284 to 361 (ARGT…GPQG), 380 to 399 (SRTPQQPTHPSTRAKTRRFP), and 581 to 631 (SFLK…DDLD). Residues arginine 285, arginine 295, arginine 329, and arginine 337 each carry the asymmetric dimethylarginine modification. Over residues 287 to 308 (TIQSSPQNRFPCQPFQSPSSWL) the composition is skewed to polar residues. Residues 319–332 (TPNSSCSTPSRTSS) are compositionally biased toward low complexity. Over residues 380–390 (SRTPQQPTHPS) the composition is skewed to polar residues. Acidic residues predominate over residues 618-631 (ASPEEELPEADDLD).

As to quaternary structure, interacts with MCM8; this interaction is necessary for MCM8-MCM9 helicase complex recruitment to DNA damage sites. Interacts with RPA1; this interaction associates HROB with the RPA complex.

It localises to the nucleus. The protein localises to the chromosome. In terms of biological role, DNA-binding protein involved in homologous recombination that acts by recruiting the MCM8-MCM9 helicase complex to sites of DNA damage to promote DNA repair synthesis. The protein is Homologous recombination OB-fold protein of Homo sapiens (Human).